A 416-amino-acid polypeptide reads, in one-letter code: Gamma-glutamyl phosphate reductase (416 aa).

The protein belongs to the gamma-glutamyl phosphate reductase family.

Its subcellular location is the cytoplasm. It carries out the reaction L-glutamate 5-semialdehyde + phosphate + NADP(+) = L-glutamyl 5-phosphate + NADPH + H(+). The protein operates within amino-acid biosynthesis; L-proline biosynthesis; L-glutamate 5-semialdehyde from L-glutamate: step 2/2. Its function is as follows. Catalyzes the NADPH-dependent reduction of L-glutamate 5-phosphate into L-glutamate 5-semialdehyde and phosphate. The product spontaneously undergoes cyclization to form 1-pyrroline-5-carboxylate. This Vibrio atlanticus (strain LGP32) (Vibrio splendidus (strain Mel32)) protein is Gamma-glutamyl phosphate reductase.